A 191-amino-acid chain; its full sequence is CASP-like protein 4C2 (191 aa).

At 1 to 29 (MEAADSATNNSKDTHFYGKSRAENRRRSD) the chain is on the cytoplasmic side. Residues 30–50 (AMLLLFRALTFSFSLAAVVVM) traverse the membrane as a helical segment. Over 51–72 (GTNRYRINPQLKVSWYDFEPYR) the chain is Extracellular. Residues 73 to 93 (YVLAVNAIICIYSFVETWLAV) form a helical membrane-spanning segment. The Cytoplasmic segment spans residues 94–116 (YTYLQGSYLLPEIFQVWFDYGHD). The helical transmembrane segment at 117–137 (QGFAYLLFSANSAGVAMAQLL) threads the bilayer. Over 138–161 (QSGNTLIHGAYHCTEAGGYCTQAR) the chain is Extracellular. Residues 162 to 182 (VSIALGFVAFLFLALSSLLTG) form a helical membrane-spanning segment. The Cytoplasmic portion of the chain corresponds to 183–191 (LRVARWYLR).

The protein belongs to the Casparian strip membrane proteins (CASP) family. As to quaternary structure, homodimer and heterodimers.

Its subcellular location is the cell membrane. This chain is CASP-like protein 4C2, found in Physcomitrium patens (Spreading-leaved earth moss).